We begin with the raw amino-acid sequence, 600 residues long: Elongation factor 4 (600 aa).

Residues 4-186 (SKIRNFSIIA…AIVEKIPSPS (183 aa)) enclose the tr-type G domain. GTP-binding positions include 16–21 (DHGKST) and 133–136 (NKID).

It belongs to the TRAFAC class translation factor GTPase superfamily. Classic translation factor GTPase family. LepA subfamily.

The protein localises to the cell membrane. The enzyme catalyses GTP + H2O = GDP + phosphate + H(+). Its function is as follows. Required for accurate and efficient protein synthesis under certain stress conditions. May act as a fidelity factor of the translation reaction, by catalyzing a one-codon backward translocation of tRNAs on improperly translocated ribosomes. Back-translocation proceeds from a post-translocation (POST) complex to a pre-translocation (PRE) complex, thus giving elongation factor G a second chance to translocate the tRNAs correctly. Binds to ribosomes in a GTP-dependent manner. The sequence is that of Elongation factor 4 from Mycoplasma mycoides subsp. mycoides SC (strain CCUG 32753 / NCTC 10114 / PG1).